Consider the following 83-residue polypeptide: Transmembrane protein EP84R (83 aa).

A run of 2 helical transmembrane segments spans residues 31-51 (IIGVILLVISLLFIFIGIIIL) and 59-79 (TGSIFVVLSLILGGGGFFLIY).

The protein belongs to the asfivirus EP84R family.

It is found in the virion membrane. The sequence is that of Transmembrane protein EP84R from Ornithodoros (relapsing fever ticks).